The chain runs to 289 residues: Elongation factor Ts (289 aa).

Residues 82 to 85 (TDFL) are involved in Mg(2+) ion dislocation from EF-Tu.

The protein belongs to the EF-Ts family.

The protein localises to the cytoplasm. Functionally, associates with the EF-Tu.GDP complex and induces the exchange of GDP to GTP. It remains bound to the aminoacyl-tRNA.EF-Tu.GTP complex up to the GTP hydrolysis stage on the ribosome. This Pseudomonas paraeruginosa (strain DSM 24068 / PA7) (Pseudomonas aeruginosa (strain PA7)) protein is Elongation factor Ts.